Reading from the N-terminus, the 139-residue chain is ATP synthase epsilon chain (139 aa).

It belongs to the ATPase epsilon chain family. In terms of assembly, F-type ATPases have 2 components, CF(1) - the catalytic core - and CF(0) - the membrane proton channel. CF(1) has five subunits: alpha(3), beta(3), gamma(1), delta(1), epsilon(1). CF(0) has three main subunits: a, b and c.

Its subcellular location is the cell inner membrane. Functionally, produces ATP from ADP in the presence of a proton gradient across the membrane. This is ATP synthase epsilon chain from Pectobacterium carotovorum subsp. carotovorum (strain PC1).